Reading from the N-terminus, the 666-residue chain is Chaperone protein dnaK1 (666 aa).

Residue Thr198 is modified to Phosphothreonine; by autocatalysis.

Belongs to the heat shock protein 70 family.

Functionally, acts as a chaperone. This Prochlorococcus marinus (strain SARG / CCMP1375 / SS120) protein is Chaperone protein dnaK1 (dnaK1).